A 316-amino-acid chain; its full sequence is MRIYSLIDSQTLMTKGFASEVMRSPEPPKKWDIAKKKGGMRTIYHPSSKVKLIQYWLMNNVFSKLPMHNAAYAFVKNRSIKSNALLHAESKNKYYVKIDLKDFFPSIKFTDFEYAFTRYRDRIEFTTEYDKELLQLIKTICFISDSTLPIGFPTSPLIANFVARELDEKLTQKLNAIDKLNATYTRYADDIIVSTNMKGASKLILDCFKRTMKEIGPDFKINIKKFKICSASGGSIVVTGLKVCHDFHITLHRSMKDKIRLHLSLLSKGILKDEDHNKLSGYIAYAKDIDPHFYTKLNRKYFQEIKWIQNLHNKVE.

The Reverse transcriptase domain maps to 1 to 243; sequence MRIYSLIDSQ…GSIVVTGLKV (243 aa). The Mg(2+) site is built by Asp-99, Asp-189, and Asp-190. A necessary and required for recognition and binding of RNA region spans residues 247-316; the sequence is FHITLHRSMK…WIQNLHNKVE (70 aa).

Belongs to the bacterial reverse transcriptase family.

It catalyses the reaction DNA(n) + a 2'-deoxyribonucleoside 5'-triphosphate = DNA(n+1) + diphosphate. Reverse transcriptase (RT) component of antiviral defense system retron Ec73, composed of a non-coding RNA (ncRNA) followed by a ribosyltransferase/DNA-binding protein then a reverse transcriptase (RT). Expression of this retron confers protection against bacteriophages SECphi4, SECphi6, SECphi27 and P1. At multiplicity of infection (MOI) of 0.02 cultures grow normally when infected with SECphi4 without collapsing, at MOI 2 cultures enter growth stasis. Responsible for synthesis of msDNA-Ec73 (a branched molecule with RNA linked by a 2',5'-phosphodiester bond to ssDNA). The retron transcript serves as primer (from a conserved internal G residue) and template for the reaction, and codes for the RT. Recognizes only its cognate RNA as a primer template. The chain is Retron Ec73 reverse transcriptase from Escherichia coli.